The following is a 389-amino-acid chain: MDPAMQAPLRIAMVAGEASGDMLAALLIGGLQADWPGIELCGIGGPEMARRGFTPWWPSERLAVHGYSMQMLRRLRELLGIRRQLRRRLLAHRPALFIGIDAPDFNLGLEADLRAAGVKTVHFVCPSIWAWRAHRVGQIRRSADHVLCIFPFEPALLAQHGIAATYVGHPLAALIALQPDRAAARAQLGLRADDEVLAILPGSRASEIEYLARPFFQAAALLRQTRPALKLLVPAVLPLRERIVQAAQAAGMGEQVQIIAGQSHTVLAACDATLIASGTATLEAALFKRPMVIAYRMHPLNWSLMRRQQLQPWVGLPNILCREFVVPELLQDAATPQALCAATQHWLDARRQHPPTITALERRFTALHHSLQRNTPQLAADALRTILAH.

It belongs to the LpxB family.

It carries out the reaction a lipid X + a UDP-2-N,3-O-bis[(3R)-3-hydroxyacyl]-alpha-D-glucosamine = a lipid A disaccharide + UDP + H(+). It functions in the pathway bacterial outer membrane biogenesis; LPS lipid A biosynthesis. Condensation of UDP-2,3-diacylglucosamine and 2,3-diacylglucosamine-1-phosphate to form lipid A disaccharide, a precursor of lipid A, a phosphorylated glycolipid that anchors the lipopolysaccharide to the outer membrane of the cell. This Verminephrobacter eiseniae (strain EF01-2) protein is Lipid-A-disaccharide synthase.